The following is a 50-amino-acid chain: uncharacterized protein (50 aa).

This is an uncharacterized protein from Ornithodoros (relapsing fever ticks).